The sequence spans 61 residues: Cytotoxin homolog 3 (61 aa).

Intrachain disulfides connect C3/C22, C15/C39, C43/C54, and C55/C60.

It belongs to the three-finger toxin family. Short-chain subfamily. Orphan group XV sub-subfamily. In terms of tissue distribution, expressed by the venom gland.

The protein resides in the secreted. Its subcellular location is the target cell membrane. Functionally, has low cytotoxic activity. The polypeptide is Cytotoxin homolog 3 (Naja melanoleuca (Forest cobra)).